Consider the following 408-residue polypeptide: Succinylornithine transaminase (408 aa).

At Lys252 the chain carries N6-(pyridoxal phosphate)lysine.

Belongs to the class-III pyridoxal-phosphate-dependent aminotransferase family. AstC subfamily. The cofactor is pyridoxal 5'-phosphate.

It carries out the reaction N(2)-succinyl-L-ornithine + 2-oxoglutarate = N-succinyl-L-glutamate 5-semialdehyde + L-glutamate. Its pathway is amino-acid degradation; L-arginine degradation via AST pathway; L-glutamate and succinate from L-arginine: step 3/5. In terms of biological role, catalyzes the transamination of N(2)-succinylornithine and alpha-ketoglutarate into N(2)-succinylglutamate semialdehyde and glutamate. Can also act as an acetylornithine aminotransferase. This Salmonella choleraesuis (strain SC-B67) protein is Succinylornithine transaminase.